The sequence spans 266 residues: Putative carbamate hydrolase RutD (266 aa).

Belongs to the AB hydrolase superfamily. Hydrolase RutD family.

It catalyses the reaction carbamate + 2 H(+) = NH4(+) + CO2. Its function is as follows. Involved in pyrimidine catabolism. May facilitate the hydrolysis of carbamate, a reaction that can also occur spontaneously. This is Putative carbamate hydrolase RutD from Escherichia coli O103:H2 (strain 12009 / EHEC).